A 142-amino-acid polypeptide reads, in one-letter code: Large ribosomal subunit protein uL11 (142 aa).

The protein belongs to the universal ribosomal protein uL11 family. Part of the ribosomal stalk of the 50S ribosomal subunit. Interacts with L10 and the large rRNA to form the base of the stalk. L10 forms an elongated spine to which L12 dimers bind in a sequential fashion forming a multimeric L10(L12)X complex. In terms of processing, one or more lysine residues are methylated.

In terms of biological role, forms part of the ribosomal stalk which helps the ribosome interact with GTP-bound translation factors. The sequence is that of Large ribosomal subunit protein uL11 from Vibrio campbellii (strain ATCC BAA-1116).